A 63-amino-acid chain; its full sequence is Small ribosomal subunit protein eS17 (63 aa).

The protein belongs to the eukaryotic ribosomal protein eS17 family.

This is Small ribosomal subunit protein eS17 from Methanococcus maripaludis (strain C6 / ATCC BAA-1332).